A 569-amino-acid polypeptide reads, in one-letter code: Urease subunit alpha (569 aa).

Positions 132 to 569 (GGIDSHIHFI…LPLAQRYFLF (438 aa)) constitute a Urease domain. Residues His137, His139, and Lys220 each coordinate Ni(2+). An N6-carboxylysine modification is found at Lys220. A substrate-binding site is contributed by His222. Residues His249 and His275 each contribute to the Ni(2+) site. His323 acts as the Proton donor in catalysis. Residue Asp363 coordinates Ni(2+).

It belongs to the metallo-dependent hydrolases superfamily. Urease alpha subunit family. As to quaternary structure, heterotrimer of UreA (gamma), UreB (beta) and UreC (alpha) subunits. Three heterotrimers associate to form the active enzyme. Ni cation serves as cofactor. Post-translationally, carboxylation allows a single lysine to coordinate two nickel ions.

The protein resides in the cytoplasm. It carries out the reaction urea + 2 H2O + H(+) = hydrogencarbonate + 2 NH4(+). It participates in nitrogen metabolism; urea degradation; CO(2) and NH(3) from urea (urease route): step 1/1. This chain is Urease subunit alpha, found in Dechloromonas aromatica (strain RCB).